Here is a 286-residue protein sequence, read N- to C-terminus: Flagellar filament 33 kDa core protein (286 aa).

The protein belongs to the bacterial flagellin family. The flagellum consists of an outer layer composed of repeating units of FlaA around a core that contains several antigenically related polypeptides.

It localises to the periplasmic flagellum. Its subcellular location is the periplasm. Functionally, component of the core of the flagella. This Treponema phagedenis protein is Flagellar filament 33 kDa core protein.